Here is a 386-residue protein sequence, read N- to C-terminus: Succinate--CoA ligase [ADP-forming] subunit beta (386 aa).

The region spanning 9 to 243 is the ATP-grasp domain; it reads KQLFRKYSIP…PAEDDPAEAE (235 aa). Residues Lys45, 52–54, Glu98, Val101, and Glu106 each bind ATP; that span reads GRG. The Mg(2+) site is built by Asn198 and Asp212. Substrate-binding positions include Asn263 and 320–322; that span reads GIL.

The protein belongs to the succinate/malate CoA ligase beta subunit family. Heterotetramer of two alpha and two beta subunits. It depends on Mg(2+) as a cofactor.

The catalysed reaction is succinate + ATP + CoA = succinyl-CoA + ADP + phosphate. It catalyses the reaction GTP + succinate + CoA = succinyl-CoA + GDP + phosphate. It participates in carbohydrate metabolism; tricarboxylic acid cycle; succinate from succinyl-CoA (ligase route): step 1/1. In terms of biological role, succinyl-CoA synthetase functions in the citric acid cycle (TCA), coupling the hydrolysis of succinyl-CoA to the synthesis of either ATP or GTP and thus represents the only step of substrate-level phosphorylation in the TCA. The beta subunit provides nucleotide specificity of the enzyme and binds the substrate succinate, while the binding sites for coenzyme A and phosphate are found in the alpha subunit. The sequence is that of Succinate--CoA ligase [ADP-forming] subunit beta from Desulfotalea psychrophila (strain LSv54 / DSM 12343).